Here is a 156-residue protein sequence, read N- to C-terminus: ATP synthase subunit b (156 aa).

Residues 7–29 (LIGQMGTFLVFWWFVNKVIWPMF) form a helical membrane-spanning segment.

This sequence belongs to the ATPase B chain family. F-type ATPases have 2 components, F(1) - the catalytic core - and F(0) - the membrane proton channel. F(1) has five subunits: alpha(3), beta(3), gamma(1), delta(1), epsilon(1). F(0) has three main subunits: a(1), b(2) and c(10-14). The alpha and beta chains form an alternating ring which encloses part of the gamma chain. F(1) is attached to F(0) by a central stalk formed by the gamma and epsilon chains, while a peripheral stalk is formed by the delta and b chains.

It is found in the cell inner membrane. In terms of biological role, f(1)F(0) ATP synthase produces ATP from ADP in the presence of a proton or sodium gradient. F-type ATPases consist of two structural domains, F(1) containing the extramembraneous catalytic core and F(0) containing the membrane proton channel, linked together by a central stalk and a peripheral stalk. During catalysis, ATP synthesis in the catalytic domain of F(1) is coupled via a rotary mechanism of the central stalk subunits to proton translocation. Its function is as follows. Component of the F(0) channel, it forms part of the peripheral stalk, linking F(1) to F(0). The protein is ATP synthase subunit b of Dichelobacter nodosus (strain VCS1703A).